The sequence spans 219 residues: Endo-type membrane-bound lytic murein transglycosylase A-like protein (219 aa).

This sequence belongs to the transglycosylase Slt family.

The catalysed reaction is Endolytic cleavage of the (1-&gt;4)-beta-glycosidic linkage between N-acetylmuramic acid (MurNAc) and N-acetylglucosamine (GlcNAc) residues in peptidoglycan with concomitant formation of a 1,6-anhydrobond in the MurNAc residue.. In terms of biological role, murein-degrading enzyme. May play a role in recycling of muropeptides during cell elongation and/or cell division (Potential). This chain is Endo-type membrane-bound lytic murein transglycosylase A-like protein, found in Shigella flexneri.